Here is a 499-residue protein sequence, read N- to C-terminus: Cytochrome P450 71A27 (499 aa).

Residues 3–23 (MILISLCLTTLLAFLFLKPLL) form a helical membrane-spanning segment. A heme-binding site is contributed by C438.

The protein belongs to the cytochrome P450 family. Heme is required as a cofactor.

Its subcellular location is the membrane. In Arabidopsis thaliana (Mouse-ear cress), this protein is Cytochrome P450 71A27 (CYP71A27).